The following is an 810-amino-acid chain: DNA-binding protein REB1 (810 aa).

2 stretches are compositionally biased toward basic and acidic residues: residues 1-10 (MPSGHNDKNA) and 29-44 (HQNH…LENK). Disordered regions lie at residues 1-80 (MPSG…ENIS), 114-161 (NQQD…GVDD), 180-243 (NNNN…TNND), 294-313 (HGLN…LSNS), and 346-365 (QDTQ…AGSV). 2 stretches are compositionally biased toward low complexity: residues 51–64 (IVES…NNND) and 124–135 (NNNTDNGNDSNN). Over residues 149-161 (DKNKKDAGVGVDD) the composition is skewed to basic and acidic residues. The segment covering 180–191 (NNNNNNSIANDS) has biased composition (low complexity). The segment covering 198-208 (HDNGNNHENSQ) has biased composition (basic and acidic residues). Residues 346–355 (QDTQPHQQKS) show a composition bias toward polar residues. Phosphoserine is present on Ser-355. The 54-residue stretch at 470 to 523 (HIFEQRGKWTAEEEQELAKLCAEKEGQWAEIGKTLGRMPEDCRDRWRNYVKCGT) folds into the HTH myb-type domain. The H-T-H motif DNA-binding region spans 497-519 (WAEIGKTLGRMPEDCRDRWRNYV). Residues 572–667 (QNDHRNNDED…STHSKSLSNT (96 aa)) form a disordered region. Over residues 586–606 (ASAAAAAAAAIQEQQQLLQQK) the composition is skewed to low complexity. Basic and acidic residues predominate over residues 627–636 (DNKDEDKPHD). Residues 643–667 (DDNSQNSMVPAPSATSTHSKSLSNT) show a composition bias toward polar residues. The 26-residue stretch at 692 to 717 (NWTIVSERMGGTRSRIQCRYKWNKLV) folds into the Myb-like domain. Residue Lys-807 forms a Glycyl lysine isopeptide (Lys-Gly) (interchain with G-Cter in SUMO) linkage.

Its subcellular location is the nucleus. Its function is as follows. DNA-binding protein that recognizes sites within both the enhancer and the promoter of rRNA transcription, as well as upstream of many genes transcribed by RNA polymerase II. It is essential for cell growth. May stimulate or inhibit transcription. Specifically recognizes the sequence 5'-CCGGGTA-3' or 5'-CGGGTRR-3' (where R is any purine). A member of the general regulatory factors (GRFs) which act as genome partitioners. Acts as a chromatin insulator which are known as STARs (Subtelomeric anti-silencing region). STARs prevent negative or positive transcription influence by extending across chromatin to a promoter. The polypeptide is DNA-binding protein REB1 (REB1) (Saccharomyces cerevisiae (strain ATCC 204508 / S288c) (Baker's yeast)).